Here is a 439-residue protein sequence, read N- to C-terminus: GTPase Obg (439 aa).

The Obg domain maps to 5–164 (TDFFDQATIV…LTLELELKML (160 aa)). Positions 165 to 335 (ADVGLVGFPN…LLQRVAELLR (171 aa)) constitute an OBG-type G domain. GTP contacts are provided by residues 171-178 (GFPNAGKS), 196-200 (FTTLT), 217-220 (DIPG), 287-290 (NKAD), and 316-318 (SAA). Positions 178 and 198 each coordinate Mg(2+). The disordered stretch occupies residues 337-359 (DPPPQRDPVDPDEPPLEWPLPPV). Positions 356–433 (LPPVDENAFT…IGRAELVWDD (78 aa)) constitute an OCT domain.

Belongs to the TRAFAC class OBG-HflX-like GTPase superfamily. OBG GTPase family. In terms of assembly, monomer. Mg(2+) is required as a cofactor.

The protein localises to the cytoplasm. In terms of biological role, an essential GTPase which binds GTP, GDP and possibly (p)ppGpp with moderate affinity, with high nucleotide exchange rates and a fairly low GTP hydrolysis rate. Plays a role in control of the cell cycle, stress response, ribosome biogenesis and in those bacteria that undergo differentiation, in morphogenesis control. The chain is GTPase Obg from Chloroflexus aggregans (strain MD-66 / DSM 9485).